We begin with the raw amino-acid sequence, 370 residues long: D-aspartate oxidase (370 aa).

FAD-binding residues include Ile15, Ala49, Ser50, Gly54, Val166, Arg317, Gly346, and Gln348. The short motif at 368–370 is the Microbody targeting signal element; it reads ARL.

It belongs to the DAMOX/DASOX family. Homotetramer. FAD is required as a cofactor.

The protein resides in the peroxisome matrix. It carries out the reaction D-aspartate + O2 + H2O = oxaloacetate + H2O2 + NH4(+). It catalyses the reaction D-glutamate + O2 + H2O = H2O2 + 2-oxoglutarate + NH4(+). Inhibited by malonate and D-malate. Very mildly inhibited by benzoate, ethylenediaminetetraacetic acid (EDTA), crotonate and anthranilate. May be very mildly inhibited by meso-tartrate. In terms of biological role, selectively catalyzes the oxidative deamination of acidic amino acids. Protects the organism from the toxicity of D-amino acids. Enables the organism to utilize D-amino acids as a source of nutrients. Enables the organism to utilize D-aspartate as a source of nitrogen and carbon. The protein is D-aspartate oxidase of Vanrija humicola (Yeast).